Here is a 322-residue protein sequence, read N- to C-terminus: Succinate/fumarate mitochondrial transporter (322 aa).

3 Solcar repeats span residues 8 to 99, 111 to 202, and 212 to 303; these read SHPA…YRTL, GNTF…LKEF, and LPSW…VREH. A run of 6 helical transmembrane segments spans residues 11-31, 68-88, 114-134, 177-193, 219-235, and 278-295; these read AINL…CHPL, FLAL…KMAI, FVAG…PMEV, GVSL…GANF, CIGL…NAPL, and GITP…VTFT.

It belongs to the mitochondrial carrier (TC 2.A.29) family.

Its subcellular location is the mitochondrion inner membrane. Functionally, transports cytoplasmic succinate, derived from isocitrate by the action of isocitrate lyase in the cytosol, into the mitochondrial matrix in exchange for fumarate. This is Succinate/fumarate mitochondrial transporter (SFC1) from Saccharomyces cerevisiae (strain ATCC 204508 / S288c) (Baker's yeast).